The sequence spans 500 residues: Probable lipoprotein aminopeptidase LpqL (500 aa).

An N-terminal signal peptide occupies residues 1–24 (MVNKSRMMPAVLAVAVVVAFLTTG). Cys-25 is lipidated: N-palmitoyl cysteine. Residue Cys-25 is the site of S-diacylglycerol cysteine attachment. The 92-residue stretch at 140–231 (VTGPLVAAPA…VTKSVGFQLR (92 aa)) folds into the PA domain. Residues His-271 and Asp-283 each contribute to the Zn(2+) site. Glu-316 acts as the Proton acceptor in catalysis. Glu-317, Asp-345, and His-448 together coordinate Zn(2+).

It belongs to the peptidase M28 family. M28A subfamily. Zn(2+) serves as cofactor. In terms of processing, modified by Lgt on Cys-25 with an S-linked diacylglycerol with a mixture of C16 and C19 fatty acids (palmitic and tuberculostearic acid), signal peptide is removed by LspA, modified by Lnt with an amide-linked mixture of C16 and C19 fatty acids, expressed in M.bovis.

Its subcellular location is the cell membrane. It catalyses the reaction Release of an N-terminal amino acid, Xaa-|-Yaa-, in which Xaa is preferably Leu, but may be other amino acids including Pro although not Arg or Lys, and Yaa may be Pro. Amino acid amides and methyl esters are also readily hydrolyzed, but rates on arylamides are exceedingly low.. An aminopeptidase; acts on free N-terminal amino groups with a very strong preference for Leu in the first position. The polypeptide is Probable lipoprotein aminopeptidase LpqL (lpqL) (Mycobacterium tuberculosis (strain ATCC 25618 / H37Rv)).